A 447-amino-acid polypeptide reads, in one-letter code: Tubulin beta-2 chain (447 aa).

Q11, E69, S138, G142, T143, G144, N204, and N226 together coordinate GTP. A Mg(2+)-binding site is contributed by E69. The segment at 419 to 447 (VSEYQQYQDATADDEGEYEDEEEEADLQD) is disordered. A compositionally biased stretch (acidic residues) spans 429-447 (TADDEGEYEDEEEEADLQD).

The protein belongs to the tubulin family. In terms of assembly, dimer of alpha and beta chains. A typical microtubule is a hollow water-filled tube with an outer diameter of 25 nm and an inner diameter of 15 nM. Alpha-beta heterodimers associate head-to-tail to form protofilaments running lengthwise along the microtubule wall with the beta-tubulin subunit facing the microtubule plus end conferring a structural polarity. Microtubules usually have 13 protofilaments but different protofilament numbers can be found in some organisms and specialized cells. The cofactor is Mg(2+). Expressed in leaf sheaths and suspension cultured cells.

It localises to the cytoplasm. The protein localises to the cytoskeleton. Tubulin is the major constituent of microtubules, a cylinder consisting of laterally associated linear protofilaments composed of alpha- and beta-tubulin heterodimers. Microtubules grow by the addition of GTP-tubulin dimers to the microtubule end, where a stabilizing cap forms. Below the cap, tubulin dimers are in GDP-bound state, owing to GTPase activity of alpha-tubulin. The polypeptide is Tubulin beta-2 chain (TUBB2) (Oryza sativa subsp. japonica (Rice)).